A 165-amino-acid polypeptide reads, in one-letter code: Protein SprT (165 aa).

One can recognise a SprT-like domain in the interval 19 to 163 (REKLAQANLK…RCVKCGEPLV (145 aa)). Residue histidine 78 participates in Zn(2+) binding. The active site involves glutamate 79. Histidine 82 provides a ligand contact to Zn(2+).

Belongs to the SprT family. Requires Zn(2+) as cofactor.

It is found in the cytoplasm. The sequence is that of Protein SprT from Enterobacter sp. (strain 638).